The chain runs to 196 residues: Protein GrpE (196 aa).

The segment at 1–24 (MAENERTTENFQPQDPSYAEAATT) is disordered.

Belongs to the GrpE family. As to quaternary structure, homodimer.

It localises to the cytoplasm. Participates actively in the response to hyperosmotic and heat shock by preventing the aggregation of stress-denatured proteins, in association with DnaK and GrpE. It is the nucleotide exchange factor for DnaK and may function as a thermosensor. Unfolded proteins bind initially to DnaJ; upon interaction with the DnaJ-bound protein, DnaK hydrolyzes its bound ATP, resulting in the formation of a stable complex. GrpE releases ADP from DnaK; ATP binding to DnaK triggers the release of the substrate protein, thus completing the reaction cycle. Several rounds of ATP-dependent interactions between DnaJ, DnaK and GrpE are required for fully efficient folding. In Gloeobacter violaceus (strain ATCC 29082 / PCC 7421), this protein is Protein GrpE.